Here is a 453-residue protein sequence, read N- to C-terminus: Midnolin (453 aa).

In terms of domain architecture, Ubiquitin-like spans 20–94 (MNLNIQSTTG…LTLLPSVEAG (75 aa)). Disordered regions lie at residues 185 to 219 (HLAS…TTSV), 231 to 256 (PCAE…RSRK), 330 to 374 (SQAR…QTEN), and 390 to 434 (QKRL…IDFE). 2 stretches are compositionally biased toward low complexity: residues 188–204 (SCTP…PTAS) and 239–252 (SSRG…SASS). A compositionally biased stretch (polar residues) spans 330 to 362 (SQARNPKATSPQSSEPQQTTHPVGHCQAQTRTC). Residues 365-374 (SGDRLRQTEN) show a composition bias toward basic and acidic residues. Over residues 390-399 (QKRLRRKARR) the composition is skewed to basic residues. The span at 415-428 (RTSSNSSTSSGEGS) shows a compositional bias: low complexity.

It is found in the nucleus. It localises to the cytoplasm. Its subcellular location is the cytosol. The protein resides in the nucleolus. Its function is as follows. Facilitates ubiquitin-independent proteasomal degradation of polycomb protein CBX4. Plays a role in inhibiting the activity of glucokinase GCK and both glucose-induced and basal insulin secretion. This chain is Midnolin (midn), found in Xenopus tropicalis (Western clawed frog).